The chain runs to 236 residues: E3 ubiquitin-protein ligase RNF187 (236 aa).

The RING-type zinc-finger motif lies at 12–53 (CALCQRAPREPVRADCGHRFCRACVVRFWAEEDGPFPCPECA). Asymmetric dimethylarginine; by PRMT1 is present on residues Arg98 and Arg109. Lys195 participates in a covalent cross-link: Glycyl lysine isopeptide (Lys-Gly) (interchain with G-Cter in ubiquitin). Ser200 bears the Phosphoserine mark. Glycyl lysine isopeptide (Lys-Gly) (interchain with G-Cter in ubiquitin) cross-links involve residues Lys224 and Lys225.

As to quaternary structure, homodimer. Interacts with JUN, independently of JUN phosphorylation. Interacts (via C-terminus) with TRIM7. Ubiquitinated; undergoes 'Lys-48'-linked autoubiquitination in the absence of growth factors and MAP3K1-induced 'Lys-63'-linked polyubiquitination. 'Lys-48'-autoubiquitination leads to degradation by the proteasome, while MAP3K1-induced 'Lys-63'-linked polyubiquitination results in the stabilization of the protein. 'Lys-48'- and 'Lys-63'-linked polyubiquitinations occur most probably on the same 3 C-terminal lysine residues (Lys-195, Lys-224 and Lys-225) and are thus mutually exclusive. Other sites of ubiquitination are not excluded. 'Lys-63'-linked polyubiquitination by TRIM7 in response to growth factor signaling via the MEK/ERK pathway enhances protein stability. In terms of processing, arginine methylation by PRMT1 stabilizes RNF187 by facilitating K63-linked ubiquitin chain formation, and enables dimerization, c-Jun interaction and subsequent AP1 target gene expression.

It is found in the cytoplasm. It localises to the nucleus. It carries out the reaction S-ubiquitinyl-[E2 ubiquitin-conjugating enzyme]-L-cysteine + [acceptor protein]-L-lysine = [E2 ubiquitin-conjugating enzyme]-L-cysteine + N(6)-ubiquitinyl-[acceptor protein]-L-lysine.. It functions in the pathway protein modification; protein ubiquitination. Functionally, E3 ubiquitin-protein ligase that acts as a coactivator of JUN-mediated gene activation in response to growth factor signaling via the MAP3K1 pathway, independently from MAPK8. The chain is E3 ubiquitin-protein ligase RNF187 (Rnf187) from Mus musculus (Mouse).